A 450-amino-acid polypeptide reads, in one-letter code: Dol-P-Glc:Glc(2)Man(9)GlcNAc(2)-PP-Dol alpha-1,2-glucosyltransferase (450 aa).

The chain crosses the membrane as a helical span at residues 12-32 (ISIISKYVAIVIFLIFVIIMF). Asn34 carries N-linked (GlcNAc...) asparagine glycosylation. 4 consecutive transmembrane segments (helical) span residues 158–178 (YFLF…LGLI), 190–210 (ALVG…IAFI), 243–263 (LLGY…NGGI), and 273–293 (IELH…FTIP). Residue Asn297 is glycosylated (N-linked (GlcNAc...) asparagine). Transmembrane regions (helical) follow at residues 312–332 (IILN…FTIV), 357–377 (LKPL…SSLI), 384–404 (FIGI…SPLF), and 429–449 (FIWL…KGII).

The protein belongs to the ALG10 glucosyltransferase family.

It is found in the endoplasmic reticulum membrane. The catalysed reaction is an alpha-D-Glc-(1-&gt;3)-alpha-D-Glc-(1-&gt;3)-alpha-D-Man-(1-&gt;2)-alpha-D-Man-(1-&gt;2)-alpha-D-Man-(1-&gt;3)-[alpha-D-Man-(1-&gt;2)-alpha-D-Man-(1-&gt;3)-[alpha-D-Man-(1-&gt;2)-alpha-D-Man-(1-&gt;6)]-alpha-D-Man-(1-&gt;6)]-beta-D-Man-(1-&gt;4)-beta-D-GlcNAc-(1-&gt;4)-alpha-D-GlcNAc-diphospho-di-trans,poly-cis-dolichol + a di-trans,poly-cis-dolichyl beta-D-glucosyl phosphate = a alpha-D-Glc-(1-&gt;2)-alpha-D-Glc-(1-&gt;3)-alpha-D-Glc-(1-&gt;3)-alpha-D-Man-(1-&gt;2)-alpha-D-Man-(1-&gt;2)-alpha-D-Man-(1-&gt;3)-[alpha-D-Man-(1-&gt;2)-alpha-D-Man-(1-&gt;3)-[alpha-D-Man-(1-&gt;2)-alpha-D-Man-(1-&gt;6)]-alpha-D-Man-(1-&gt;6)]-beta-D-Man-(1-&gt;4)-beta-D-GlcNAc-(1-&gt;4)-alpha-D-GlcNAc-diphospho-di-trans,poly-cis-dolichol + a di-trans,poly-cis-dolichyl phosphate + H(+). It participates in protein modification; protein glycosylation. Functionally, dol-P-Glc:Glc(2)Man(9)GlcNAc(2)-PP-Dol alpha-1,2-glucosyltransferase that operates in the biosynthetic pathway of dolichol-linked oligosaccharides, the glycan precursors employed in protein asparagine (N)-glycosylation. The assembly of dolichol-linked oligosaccharides begins on the cytosolic side of the endoplasmic reticulum membrane and finishes in its lumen. The sequential addition of sugars to dolichol pyrophosphate produces dolichol-linked oligosaccharides containing fourteen sugars, including two GlcNAcs, nine mannoses and three glucoses. Once assembled, the oligosaccharide is transferred from the lipid to nascent proteins by oligosaccharyltransferases. In the lumen of the endoplasmic reticulum, adds the third and last glucose residue from dolichyl phosphate glucose (Dol-P-Glc) onto the lipid-linked oligosaccharide intermediate Glc(2)Man(9)GlcNAc(2)-PP-Dol to produce Glc(3)Man(9)GlcNAc(2)-PP-Dol. This chain is Dol-P-Glc:Glc(2)Man(9)GlcNAc(2)-PP-Dol alpha-1,2-glucosyltransferase (DIE2), found in Candida albicans (strain SC5314 / ATCC MYA-2876) (Yeast).